A 100-amino-acid polypeptide reads, in one-letter code: Urease subunit gamma (100 aa).

This sequence belongs to the urease gamma subunit family. As to quaternary structure, heterotrimer of UreA (gamma), UreB (beta) and UreC (alpha) subunits. Three heterotrimers associate to form the active enzyme.

The protein resides in the cytoplasm. The enzyme catalyses urea + 2 H2O + H(+) = hydrogencarbonate + 2 NH4(+). Its pathway is nitrogen metabolism; urea degradation; CO(2) and NH(3) from urea (urease route): step 1/1. In Methylobacillus flagellatus (strain ATCC 51484 / DSM 6875 / VKM B-1610 / KT), this protein is Urease subunit gamma.